The following is a 335-amino-acid chain: MMEGHILFFFLVVMVQFVTGVLANGLIVVVHAIDLIMWKKMAPLDLLLFCLATSRIILQLCILFAQLCLFSLVRHTLFEDNITFVFIINELSLWFATWLGVFYCAKIATIPHPLFLWLKMRISRLVPWLILGSVLYVIITTFIHSRETSAILKPIFISLFPKNATQVGTGHATLLSVLVLGLTLPLFIFTVAVLLLIYSLWNYSRQMRTMVGTREYSGHAHISAMLSILSFLILYLSHYMVAVLISTQVLYLGSRTFVFCLLVIGMYPSIHSIVLILGNPKLKRNAKMFIVHCKCCHCTRAWVTSRSPRLSDLPVPPTHPSANKTSCSEACIMPS.

Residues M1–L7 lie on the Extracellular side of the membrane. Residues F8 to V28 form a helical membrane-spanning segment. Topologically, residues V29–P43 are cytoplasmic. A helical membrane pass occupies residues L44–F64. Residues A65–N81 lie on the Extracellular side of the membrane. N-linked (GlcNAc...) asparagine glycosylation is present at N81. The helical transmembrane segment at I82 to F102 threads the bilayer. The Cytoplasmic segment spans residues Y103–R124. The chain crosses the membrane as a helical span at residues L125–S145. The Extracellular segment spans residues R146–S176. N163 carries an N-linked (GlcNAc...) asparagine glycan. Residues V177–I197 form a helical membrane-spanning segment. The Cytoplasmic portion of the chain corresponds to Y198–A224. The helical transmembrane segment at M225–I245 threads the bilayer. Residues S246 to T256 are Extracellular-facing. The chain crosses the membrane as a helical span at residues F257–L277. At G278–S335 the chain is on the cytoplasmic side. The tract at residues P308–C327 is disordered.

This sequence belongs to the G-protein coupled receptor T2R family. Expressed in subsets of taste receptor cells of the tongue and palate epithelium and exclusively in gustducin-positive cells. Expressed in the duodenum, antrum and fundus (part of the stomach).

It is found in the membrane. In terms of biological role, gustducin-coupled receptor implicated in the perception of bitter compounds in the oral cavity and the gastrointestinal tract. Signals through PLCB2 and the calcium-regulated cation channel TRPM5. The protein is Taste receptor type 2 member 119 (Tas2r119) of Rattus norvegicus (Rat).